Consider the following 535-residue polypeptide: Xylan 1,3-beta-xylosidase (535 aa).

D16 acts as the Proton acceptor in catalysis. E189 serves as the catalytic Proton donor.

The protein belongs to the glycosyl hydrolase 43 family.

It catalyses the reaction Hydrolysis of successive xylose residues from the non-reducing termini of (1-&gt;3)-beta-D-xylans.. Inhibited by Ag(+), Cu(2+), Hg(2+), Mn(2+), Pb(2+), Zn(2+) and p-chloromercuric benzoic acid. Its function is as follows. Beta-1,3-xylosidase that hydrolyzes beta-1,3-xylooligosaccharides to D-xylose. In Vibrio sp, this protein is Xylan 1,3-beta-xylosidase (xloA).